A 341-amino-acid polypeptide reads, in one-letter code: Very-long-chain 3-oxoacyl-CoA reductase (341 aa).

Residues 17-37 traverse the membrane as a helical segment; sequence ALYGALLLGVYKLTTFALSLV. 7 residues coordinate NADP(+): Val63, Asp117, Asn144, Tyr218, Lys222, Val251, and Ser253. Tyr218 functions as the Proton donor in the catalytic mechanism. Lys222 (lowers pKa of active site Tyr) is an active-site residue.

Belongs to the short-chain dehydrogenases/reductases (SDR) family.

Its subcellular location is the endoplasmic reticulum membrane. The enzyme catalyses a very-long-chain (3R)-3-hydroxyacyl-CoA + NADP(+) = a very-long-chain 3-oxoacyl-CoA + NADPH + H(+). It functions in the pathway lipid metabolism; fatty acid biosynthesis. In terms of biological role, component of the microsomal membrane bound fatty acid elongation system, which produces the 26-carbon very long-chain fatty acids (VLCFA) from palmitate. Catalyzes the reduction of the 3-ketoacyl-CoA intermediate that is formed in each cycle of fatty acid elongation. VLCFAs serve as precursors for ceramide and sphingolipids. In Meyerozyma guilliermondii (strain ATCC 6260 / CBS 566 / DSM 6381 / JCM 1539 / NBRC 10279 / NRRL Y-324) (Yeast), this protein is Very-long-chain 3-oxoacyl-CoA reductase.